Reading from the N-terminus, the 421-residue chain is Nuclear envelope integral membrane protein 2 (421 aa).

The N-terminal stretch at 1-22 (MLPRLWWLVLWLQPLATLPASA) is a signal peptide. Transmembrane regions (helical) follow at residues 64–84 (YMWS…IVYI), 147–167 (NIVD…FLYA), 175–195 (VFYY…FVLL), 206–226 (TFGA…CQLM), 238–258 (MYIL…CYSH), and 281–301 (LVYT…VLLF).

The protein belongs to the NEMP family. In the ovary, highly expressed in somatic cells.

The protein resides in the nucleus inner membrane. This is Nuclear envelope integral membrane protein 2 (Nemp2) from Mus musculus (Mouse).